We begin with the raw amino-acid sequence, 395 residues long: Elongation factor Tu (395 aa).

Residues Lys-10–Gln-204 form the tr-type G domain. The tract at residues Gly-19–Thr-26 is G1. Gly-19 to Thr-26 provides a ligand contact to GTP. A Mg(2+)-binding site is contributed by Thr-26. The tract at residues Gly-60–Asn-64 is G2. The tract at residues Asp-81–Gly-84 is G3. GTP is bound by residues Asp-81–His-85 and Asn-136–Asp-139. Residues Asn-136–Asp-139 form a G4 region. The interval Ser-174–Leu-176 is G5.

This sequence belongs to the TRAFAC class translation factor GTPase superfamily. Classic translation factor GTPase family. EF-Tu/EF-1A subfamily. In terms of assembly, monomer.

The protein resides in the cytoplasm. It carries out the reaction GTP + H2O = GDP + phosphate + H(+). Its function is as follows. GTP hydrolase that promotes the GTP-dependent binding of aminoacyl-tRNA to the A-site of ribosomes during protein biosynthesis. This Symbiobacterium thermophilum (strain DSM 24528 / JCM 14929 / IAM 14863 / T) protein is Elongation factor Tu.